The sequence spans 145 residues: Large ribosomal subunit protein uL13 (145 aa).

It belongs to the universal ribosomal protein uL13 family. Part of the 50S ribosomal subunit.

Functionally, this protein is one of the early assembly proteins of the 50S ribosomal subunit, although it is not seen to bind rRNA by itself. It is important during the early stages of 50S assembly. The chain is Large ribosomal subunit protein uL13 from Halobacterium salinarum (strain ATCC 700922 / JCM 11081 / NRC-1) (Halobacterium halobium).